The following is a 475-amino-acid chain: Ribulose bisphosphate carboxylase large chain (475 aa).

A propeptide spanning residues 1–2 (MS) is cleaved from the precursor. Pro3 bears the N-acetylproline mark. At Lys14 the chain carries N6,N6,N6-trimethyllysine. Positions 123 and 173 each coordinate substrate. Catalysis depends on Lys175, which acts as the Proton acceptor. Lys177 serves as a coordination point for substrate. Residues Lys201, Asp203, and Glu204 each coordinate Mg(2+). Lys201 is modified (N6-carboxylysine). The Proton acceptor role is filled by His294. Substrate contacts are provided by Arg295, His327, and Ser379.

The protein belongs to the RuBisCO large chain family. Type I subfamily. As to quaternary structure, heterohexadecamer of 8 large chains and 8 small chains; disulfide-linked. The disulfide link is formed within the large subunit homodimers. The cofactor is Mg(2+). In terms of processing, the disulfide bond which can form in the large chain dimeric partners within the hexadecamer appears to be associated with oxidative stress and protein turnover.

It localises to the plastid. The protein resides in the chloroplast. The enzyme catalyses 2 (2R)-3-phosphoglycerate + 2 H(+) = D-ribulose 1,5-bisphosphate + CO2 + H2O. It carries out the reaction D-ribulose 1,5-bisphosphate + O2 = 2-phosphoglycolate + (2R)-3-phosphoglycerate + 2 H(+). Functionally, ruBisCO catalyzes two reactions: the carboxylation of D-ribulose 1,5-bisphosphate, the primary event in carbon dioxide fixation, as well as the oxidative fragmentation of the pentose substrate in the photorespiration process. Both reactions occur simultaneously and in competition at the same active site. The polypeptide is Ribulose bisphosphate carboxylase large chain (Citrus sinensis (Sweet orange)).